A 338-amino-acid chain; its full sequence is MNQISNPLKGNNNKIPIWFMRQAGRYLSEYKKVRETTKNFLDFCYDVNKATEVTLQPIKRYGFDAAIIFSDILVLPHAFGWEIDFKENIGPILKQFKSQEDFKYLQSNPNNKLGKVYEIIKKVKADLTSTTSLIGFAGSPWTVMSYMLEGKGKHDFKTSKKFIYENKILAKELLNFITEKTADHLINQAKSGADVLKLFDSWSGVLPEDEFTKFVIEPTKKIILKVKEVFPKIPMIAFPKGAGLLYEKFIKEVPVDILAVDQMVPLEKMKKWSDKVIVQGNLDPVVLLTNKEIIKEKAYKIIQEMKGKNFIFNLGHGILPKTPPENVEFLTECIRSCE.

Substrate contacts are provided by residues Arg-21–Arg-25, Asp-71, Tyr-146, Ser-201, and His-316.

Belongs to the uroporphyrinogen decarboxylase family. Homodimer.

It is found in the cytoplasm. The enzyme catalyses uroporphyrinogen III + 4 H(+) = coproporphyrinogen III + 4 CO2. It functions in the pathway porphyrin-containing compound metabolism; protoporphyrin-IX biosynthesis; coproporphyrinogen-III from 5-aminolevulinate: step 4/4. Catalyzes the decarboxylation of four acetate groups of uroporphyrinogen-III to yield coproporphyrinogen-III. The sequence is that of Uroporphyrinogen decarboxylase from Rickettsia akari (strain Hartford).